The primary structure comprises 142 residues: Coactosin-like protein (142 aa).

Ala2 carries the post-translational modification N-acetylalanine. The ADF-H domain maps to 2–130 (ATKIDKEACR…EEDFIRSELK (129 aa)). Residue Ser23 is modified to Phosphoserine. Positions 66 to 75 (TGDAMSKRSK) are flexible and important for F-actin binding. An N6-acetyllysine modification is found at Lys102. The residue at position 141 (Ser141) is a Phosphoserine.

This sequence belongs to the actin-binding proteins ADF family. Coactosin subfamily. As to quaternary structure, interacts with 5-lipoxygenase (ALOX5/5LO) in a calcium-independent manner. Binds to F-actin with a stoichiometry of 1:2.

It localises to the cytoplasm. Its subcellular location is the cytoskeleton. The protein localises to the nucleus. In terms of biological role, binds to F-actin in a calcium-independent manner. Has no direct effect on actin depolymerization. Acts as a chaperone for ALOX5 (5LO), influencing both its stability and activity in leukotrienes synthesis. The polypeptide is Coactosin-like protein (Rattus norvegicus (Rat)).